The following is an 81-amino-acid chain: Conotoxin ArMKLT2-01 (81 aa).

A signal peptide spans 1–19 (MKLTCVIIVVALFLTACHA). The propeptide occupies 20 to 43 (KDKQEHPAVRGSDDMQDSEDLKLA). 3 cysteine pairs are disulfide-bonded: Cys46/Cys61, Cys53/Cys65, and Cys60/Cys74.

Belongs to the conotoxin O1 superfamily. As to expression, expressed by the venom duct.

The protein resides in the secreted. This Conus arenatus (Sand-dusted cone) protein is Conotoxin ArMKLT2-01.